A 116-amino-acid polypeptide reads, in one-letter code: uncharacterized protein (116 aa).

Residues 58–78 traverse the membrane as a helical segment; that stretch reads IIVDFKFIFQIFLILSFGFFA.

The protein localises to the membrane. This is an uncharacterized protein from Rickettsia prowazekii (strain Madrid E).